The primary structure comprises 143 residues: Anti-sigma F factor (143 aa).

This sequence belongs to the anti-sigma-factor family.

It carries out the reaction L-seryl-[protein] + ATP = O-phospho-L-seryl-[protein] + ADP + H(+). It catalyses the reaction L-threonyl-[protein] + ATP = O-phospho-L-threonyl-[protein] + ADP + H(+). In terms of biological role, binds to sigma F and blocks its ability to form an RNA polymerase holoenzyme (E-sigma F). Phosphorylates SpoIIAA on a serine residue. This phosphorylation may enable SpoIIAA to act as an anti-anti-sigma factor that counteracts SpoIIAB and thus releases sigma F from inhibition. The protein is Anti-sigma F factor of Thermoanaerobacter pseudethanolicus (strain ATCC 33223 / 39E) (Clostridium thermohydrosulfuricum).